Reading from the N-terminus, the 204-residue chain is Large ribosomal subunit protein uL4 (204 aa).

Polar residues predominate over residues G42 to A55. The disordered stretch occupies residues G42–G85. Low complexity predominate over residues G68 to G79.

It belongs to the universal ribosomal protein uL4 family. In terms of assembly, part of the 50S ribosomal subunit.

Its function is as follows. One of the primary rRNA binding proteins, this protein initially binds near the 5'-end of the 23S rRNA. It is important during the early stages of 50S assembly. It makes multiple contacts with different domains of the 23S rRNA in the assembled 50S subunit and ribosome. Forms part of the polypeptide exit tunnel. This is Large ribosomal subunit protein uL4 from Vesicomyosocius okutanii subsp. Calyptogena okutanii (strain HA).